A 97-amino-acid polypeptide reads, in one-letter code: Co-chaperonin GroES (97 aa).

Belongs to the GroES chaperonin family. As to quaternary structure, heptamer of 7 subunits arranged in a ring. Interacts with the chaperonin GroEL.

The protein localises to the cytoplasm. Its function is as follows. Together with the chaperonin GroEL, plays an essential role in assisting protein folding. The GroEL-GroES system forms a nano-cage that allows encapsulation of the non-native substrate proteins and provides a physical environment optimized to promote and accelerate protein folding. GroES binds to the apical surface of the GroEL ring, thereby capping the opening of the GroEL channel. This Erwinia tasmaniensis (strain DSM 17950 / CFBP 7177 / CIP 109463 / NCPPB 4357 / Et1/99) protein is Co-chaperonin GroES.